A 311-amino-acid chain; its full sequence is Elongation factor Ts (311 aa).

Residues 81–84 are involved in Mg(2+) ion dislocation from EF-Tu; that stretch reads TDFV.

Belongs to the EF-Ts family.

It localises to the cytoplasm. In terms of biological role, associates with the EF-Tu.GDP complex and induces the exchange of GDP to GTP. It remains bound to the aminoacyl-tRNA.EF-Tu.GTP complex up to the GTP hydrolysis stage on the ribosome. The chain is Elongation factor Ts from Trichlorobacter lovleyi (strain ATCC BAA-1151 / DSM 17278 / SZ) (Geobacter lovleyi).